A 455-amino-acid chain; its full sequence is Fumarate hydratase class II (455 aa).

Substrate contacts are provided by residues 96–98, 122–125, 132–134, and T180; these read SGT, HPND, and SSN. H181 acts as the Proton donor/acceptor in catalysis. Residue S311 is part of the active site. Substrate is bound by residues S312 and 317-319; that span reads KVN.

Belongs to the class-II fumarase/aspartase family. Fumarase subfamily. As to quaternary structure, homotetramer.

It is found in the cytoplasm. The enzyme catalyses (S)-malate = fumarate + H2O. It participates in carbohydrate metabolism; tricarboxylic acid cycle; (S)-malate from fumarate: step 1/1. Functionally, involved in the TCA cycle. Catalyzes the stereospecific interconversion of fumarate to L-malate. The protein is Fumarate hydratase class II of Listeria monocytogenes serotype 4b (strain F2365).